Reading from the N-terminus, the 362-residue chain is Protein-arginine kinase (362 aa).

Residues 24–255 (IVLSSRIRLA…QQLIAQERMA (232 aa)) form the Phosphagen kinase C-terminal domain. Residues 27 to 31 (SSRIR), His-92, Arg-126, 177 to 181 (RASVM), and 208 to 213 (RGTYGE) each bind ATP. The RDXXRA motif of the pArg binding pocket involved in allosteric regulation signature appears at 338–343 (RDVRRA).

Belongs to the ATP:guanido phosphotransferase family.

The enzyme catalyses L-arginyl-[protein] + ATP = N(omega)-phospho-L-arginyl-[protein] + ADP + H(+). Appears to be allosterically activated by the binding of pArg-containing polypeptides to the pArg-binding pocket localized in the C-terminal domain of McsB. Functionally, catalyzes the specific phosphorylation of arginine residues in a large number of proteins. Is part of the bacterial stress response system. Protein arginine phosphorylation has a physiologically important role and is involved in the regulation of many critical cellular processes, such as protein homeostasis, motility, competence, and stringent and stress responses, by regulating gene expression and protein activity. The chain is Protein-arginine kinase from Geobacillus sp. (strain WCH70).